The chain runs to 424 residues: Serine hydroxymethyltransferase 1 (424 aa).

Residues L125 and G129–L131 contribute to the (6S)-5,6,7,8-tetrahydrofolate site. The residue at position 234 (K234) is an N6-(pyridoxal phosphate)lysine.

It belongs to the SHMT family. In terms of assembly, homodimer. Requires pyridoxal 5'-phosphate as cofactor.

The protein localises to the cytoplasm. It carries out the reaction (6R)-5,10-methylene-5,6,7,8-tetrahydrofolate + glycine + H2O = (6S)-5,6,7,8-tetrahydrofolate + L-serine. It functions in the pathway one-carbon metabolism; tetrahydrofolate interconversion. The protein operates within amino-acid biosynthesis; glycine biosynthesis; glycine from L-serine: step 1/1. In terms of biological role, catalyzes the reversible interconversion of serine and glycine with tetrahydrofolate (THF) serving as the one-carbon carrier. This reaction serves as the major source of one-carbon groups required for the biosynthesis of purines, thymidylate, methionine, and other important biomolecules. Also exhibits THF-independent aldolase activity toward beta-hydroxyamino acids, producing glycine and aldehydes, via a retro-aldol mechanism. This Burkholderia lata (strain ATCC 17760 / DSM 23089 / LMG 22485 / NCIMB 9086 / R18194 / 383) protein is Serine hydroxymethyltransferase 1.